The primary structure comprises 421 residues: UDP-N-acetylglucosamine 1-carboxyvinyltransferase (421 aa).

Lysine 24–asparagine 25 is a binding site for phosphoenolpyruvate. Arginine 93 is a UDP-N-acetyl-alpha-D-glucosamine binding site. Cysteine 117 functions as the Proton donor in the catalytic mechanism. Residue cysteine 117 is modified to 2-(S-cysteinyl)pyruvic acid O-phosphothioketal. UDP-N-acetyl-alpha-D-glucosamine-binding residues include aspartate 307 and isoleucine 329.

The protein belongs to the EPSP synthase family. MurA subfamily.

Its subcellular location is the cytoplasm. The catalysed reaction is phosphoenolpyruvate + UDP-N-acetyl-alpha-D-glucosamine = UDP-N-acetyl-3-O-(1-carboxyvinyl)-alpha-D-glucosamine + phosphate. It functions in the pathway cell wall biogenesis; peptidoglycan biosynthesis. Cell wall formation. Adds enolpyruvyl to UDP-N-acetylglucosamine. This Blochmanniella pennsylvanica (strain BPEN) protein is UDP-N-acetylglucosamine 1-carboxyvinyltransferase.